The chain runs to 605 residues: Progranulin (605 aa).

Positions 1-17 (MWTLVGWTILVAGLVAG) are cleaved as a signal peptide. 2 disulfides stabilise this stretch: cysteine 126/cysteine 139 and cysteine 133/cysteine 149. Asparagine 197 is a glycosylation site (N-linked (GlcNAc...) asparagine). Intrachain disulfides connect cysteine 297–cysteine 309, cysteine 303–cysteine 319, cysteine 310–cysteine 327, cysteine 320–cysteine 334, cysteine 328–cysteine 341, and cysteine 335–cysteine 348. Positions 359 to 386 (QKTPAQPSRPSQPSPPGPPGPPSPPGPL) are disordered. The segment covering 368–385 (PSQPSPPGPPGPPSPPGP) has biased composition (pro residues). 2 disulfides stabilise this stretch: cysteine 392–cysteine 404 and cysteine 398–cysteine 414.

It belongs to the granulin family. Progranulin is secreted as a homodimer. Interacts with SLPI; interaction protects progranulin from proteolysis. Interacts (via region corresponding to granulin-7 peptide) with CTSD; stabilizes CTSD and increases its proteolytic activity. Interacts (via region corresponding to granulin-7 peptide) with SORT1; this interaction mediates endocytosis and lysosome delivery of progranulin; interaction occurs at the neuronal cell surface in a stressed nervous system. Interacts with PSAP; facilitates lysosomal delivery of progranulin from the extracellular space and the biosynthetic pathway. Forms a complex with PSAP and M6PR; PSAP bridges the binding between progranulin and M6PR. Forms a complex with PSAP and SORT1; progranulin bridges the interaction between PSAP and SORT1; facilitates lysosomal targeting of PSAP via SORT1; interaction enhances PSAP uptake in primary cortical neurons. Interacts (via regions corresponding to granulin-2 and granulin-7 peptides) with GBA1; this interaction prevents aggregation of GBA1-SCARB2 complex via interaction with HSPA1A upon stress. Interacts (via region corresponding to granulin-7 peptide) with HSPA1A; mediates recruitment of HSPA1A to GBA1 and prevents GBA1 aggregation in response to stress. In terms of processing, cleaved by ELANE; proteolysis is blocked by SLPI and is concentration- and time-dependent and induces CXCL8/IL-8 production; granulin-3 and granulin-4 are resistant to ELANE. Cleaved by CTSL in lysosome thus regulating the maturation and turnover of progranulin within the lysosome.

The protein resides in the secreted. It is found in the lysosome. In terms of biological role, secreted protein that acts as a key regulator of lysosomal function and as a growth factor involved in inflammation, wound healing and cell proliferation. Regulates protein trafficking to lysosomes, and also the activity of lysosomal enzymes. Also facilitates the acidification of lysosomes, causing degradation of mature CTSD by CTSB. In addition, functions as a wound-related growth factor that acts directly on dermal fibroblasts and endothelial cells to promote division, migration and the formation of capillary-like tubule structures. Also promotes epithelial cell proliferation by blocking TNF-mediated neutrophil activation preventing release of oxidants and proteases. Moreover, modulates inflammation in neurons by preserving neurons survival, axonal outgrowth and neuronal integrity. Inhibits epithelial cell proliferation and induces epithelial cells to secrete IL-8. Its function is as follows. Stabilizes CTSD through interaction with CTSD leading to maintain its aspartic-type peptidase activity. In Cavia porcellus (Guinea pig), this protein is Progranulin (GRN).